The following is a 416-amino-acid chain: Heat shock protein DDB_G0280215 (416 aa).

The sHSP domain occupies 37–150 (SMDWGWKPRM…SQHISLFGRE (114 aa)). The disordered stretch occupies residues 216–235 (ETKERERRIRDTKGETEKKK).

This sequence belongs to the small heat shock protein (HSP20) family.

The chain is Heat shock protein DDB_G0280215 from Dictyostelium discoideum (Social amoeba).